The chain runs to 325 residues: WUSCHEL-related homeobox 8 (325 aa).

Positions 51–115 (DPKPRWNPKP…NRKSRAKHKL (65 aa)) form a DNA-binding region, homeobox; WUS-type.

This sequence belongs to the WUS homeobox family. In terms of tissue distribution, expressed only in the egg cell. Not detected in the pollen tube. Expressed in the zygote, the basal cell, and later the suspensor. Expressed in all suspensor cells, except the hypophysis, and in the embryo surrounding region (ESR) endosperm cells. Strongly expressed in the suspensor cells, with a weak expression also detected throughout the developing embryo.

It localises to the nucleus. Its function is as follows. Probable transcription factor, which may be involved in embryonic patterning. May be required for basal embryo development after fertilization. Acts partially redundantly with STIP in promoting embryonic cell division and proliferation. Promotes cotyledon boundary formation by maintaining the symmetry in CUC genes expression domains. This chain is WUSCHEL-related homeobox 8, found in Arabidopsis thaliana (Mouse-ear cress).